The following is a 225-amino-acid chain: Thymidylate kinase (225 aa).

Position 10–17 (10–17) interacts with ATP; it reads GPEGAGKT.

This sequence belongs to the thymidylate kinase family.

It carries out the reaction dTMP + ATP = dTDP + ADP. Functionally, phosphorylation of dTMP to form dTDP in both de novo and salvage pathways of dTTP synthesis. This is Thymidylate kinase from Geobacillus thermodenitrificans (strain NG80-2).